The primary structure comprises 196 residues: Orotate phosphoribosyltransferase (196 aa).

5-phospho-alpha-D-ribose 1-diphosphate contacts are provided by residues Arg-102, Lys-103, Lys-106, His-108, and 129-137 (EDVVTTGGS). Positions 133 and 161 each coordinate orotate.

The protein belongs to the purine/pyrimidine phosphoribosyltransferase family. PyrE subfamily. Homodimer. Requires Mg(2+) as cofactor.

It carries out the reaction orotidine 5'-phosphate + diphosphate = orotate + 5-phospho-alpha-D-ribose 1-diphosphate. Its pathway is pyrimidine metabolism; UMP biosynthesis via de novo pathway; UMP from orotate: step 1/2. Catalyzes the transfer of a ribosyl phosphate group from 5-phosphoribose 1-diphosphate to orotate, leading to the formation of orotidine monophosphate (OMP). The sequence is that of Orotate phosphoribosyltransferase from Prochlorococcus marinus (strain MIT 9303).